The primary structure comprises 126 residues: Methylglyoxal synthase (126 aa).

Residues 1–126 (MEKKIALIAH…LIKGLESLIF (126 aa)) enclose the MGS-like domain. Substrate contacts are provided by residues histidine 10, lysine 14, 36 to 39 (TGTT), and 56 to 57 (SG). The active-site Proton donor/acceptor is aspartate 62. Histidine 89 serves as a coordination point for substrate.

Belongs to the methylglyoxal synthase family.

It carries out the reaction dihydroxyacetone phosphate = methylglyoxal + phosphate. Its function is as follows. Catalyzes the formation of methylglyoxal from dihydroxyacetone phosphate. The protein is Methylglyoxal synthase of Borreliella burgdorferi (strain ATCC 35210 / DSM 4680 / CIP 102532 / B31) (Borrelia burgdorferi).